We begin with the raw amino-acid sequence, 217 residues long: ATP-dependent Clp protease proteolytic subunit (217 aa).

Ser121 functions as the Nucleophile in the catalytic mechanism. His146 is a catalytic residue.

It belongs to the peptidase S14 family. In terms of assembly, fourteen ClpP subunits assemble into 2 heptameric rings which stack back to back to give a disk-like structure with a central cavity, resembling the structure of eukaryotic proteasomes.

The protein resides in the cytoplasm. The enzyme catalyses Hydrolysis of proteins to small peptides in the presence of ATP and magnesium. alpha-casein is the usual test substrate. In the absence of ATP, only oligopeptides shorter than five residues are hydrolyzed (such as succinyl-Leu-Tyr-|-NHMec, and Leu-Tyr-Leu-|-Tyr-Trp, in which cleavage of the -Tyr-|-Leu- and -Tyr-|-Trp bonds also occurs).. Functionally, cleaves peptides in various proteins in a process that requires ATP hydrolysis. Has a chymotrypsin-like activity. Plays a major role in the degradation of misfolded proteins. This is ATP-dependent Clp protease proteolytic subunit from Burkholderia cenocepacia (strain HI2424).